The chain runs to 431 residues: Enolase (431 aa).

Residue Gln167 participates in (2R)-2-phosphoglycerate binding. The active-site Proton donor is the Glu209. Mg(2+) contacts are provided by Asp246, Glu290, and Asp317. The (2R)-2-phosphoglycerate site is built by Lys342, Arg371, Ser372, and Lys393. Lys342 serves as the catalytic Proton acceptor.

This sequence belongs to the enolase family. Component of the RNA degradosome, a multiprotein complex involved in RNA processing and mRNA degradation. Mg(2+) is required as a cofactor.

It localises to the cytoplasm. Its subcellular location is the secreted. The protein resides in the cell surface. The catalysed reaction is (2R)-2-phosphoglycerate = phosphoenolpyruvate + H2O. The protein operates within carbohydrate degradation; glycolysis; pyruvate from D-glyceraldehyde 3-phosphate: step 4/5. Functionally, catalyzes the reversible conversion of 2-phosphoglycerate (2-PG) into phosphoenolpyruvate (PEP). It is essential for the degradation of carbohydrates via glycolysis. This is Enolase from Yersinia pestis bv. Antiqua (strain Antiqua).